A 365-amino-acid chain; its full sequence is Phosphatidylcholine:ceramide cholinephosphotransferase 2 (365 aa).

Residues 9-50 (LEGHLESQTNDSTNTYTSPTEAVEEEGKNGKGKPKTLSNGLR) are disordered. Over residues 14–28 (ESQTNDSTNTYTSPT) the composition is skewed to polar residues. 5 consecutive transmembrane segments (helical) span residues 80 to 100 (GIAFVYALFNLILTTVMITVV), 128 to 148 (FSVSEINGMVLVGLWITQWLF), 159 to 179 (FFFIMGTLYLYRCITMYVTTL), 219 to 239 (ILCGDFLFSGHTVVLTLTYLF), and 248 to 268 (FWWYHLVCWLLSAAGIICILV). H229 is an active-site residue. Residues H272 and D276 contribute to the active site. Residues 273–290 (YTVDVIIAYYITTRLFWW) form a helical membrane-spanning segment. Residues 291-365 (YHSMANEKNL…KIGEDNEKST (75 aa)) are Cytoplasmic-facing. Residues C331, C332, C343, and C348 are each lipidated (S-palmitoyl cysteine).

The protein belongs to the sphingomyelin synthase family. In terms of processing, palmitoylated on Cys-331, Cys-332, Cys-343 and Cys-348; which plays an important role in plasma membrane localization. As to expression, highest expression is detected in cortical bone, followed by vertebrae, kidney and liver. Expression levels are very low in spleen, muscle, heart, brown fat and thymus. Expressed in macrophages.

It is found in the cell membrane. The protein resides in the golgi apparatus membrane. It carries out the reaction an N-acylsphing-4-enine + a 1,2-diacyl-sn-glycero-3-phosphocholine = a sphingomyelin + a 1,2-diacyl-sn-glycerol. The catalysed reaction is an N-acylsphinganine + a 1,2-diacyl-sn-glycero-3-phosphocholine = an N-acylsphinganine-1-phosphocholine + a 1,2-diacyl-sn-glycerol. It catalyses the reaction an N-acyl-(4R)-4-hydroxysphinganine + a 1,2-diacyl-sn-glycero-3-phosphocholine = an N-acyl-(4R)-4-hydroxysphinganine-phosphocholine + a 1,2-diacyl-sn-glycerol. The enzyme catalyses an N-acylsphing-4-enine + a 1,2-diacyl-sn-glycero-3-phosphoethanolamine = an N-acylsphing-4-enine 1-phosphoethanolamine + a 1,2-diacyl-sn-glycerol. It carries out the reaction an N-acylsphinganine + a 1,2-diacyl-sn-glycero-3-phosphoethanolamine = an N-acylsphinganine-1-phosphoethanolamine + a 1,2-diacyl-sn-glycerol. The catalysed reaction is an N-acyl-(4R)-4-hydroxysphinganine + a 1,2-diacyl-sn-glycero-3-phosphoethanolamine = an N-acyl-(4R)-4-hydroxysphinganine-1-phosphoethanolamine + a 1,2-diacyl-sn-glycerol. It catalyses the reaction 1,2-dihexadecanoyl-sn-glycero-3-phosphocholine + an N-acylsphing-4-enine = 1,2-dihexadecanoyl-sn-glycerol + a sphingomyelin. The enzyme catalyses 1-(9Z-octadecenoyl)-2-acyl-sn-3-glycerol + a sphingomyelin = a 1-(9Z-octadecenoyl)-2-acyl-sn-glycero-3-phosphocholine + an N-acylsphing-4-enine. It carries out the reaction N-hexadecanoylsphinganine + a 1,2-diacyl-sn-glycero-3-phosphocholine = N-hexadecanoyl-sphinganine-1-phosphocholine + a 1,2-diacyl-sn-glycerol. The catalysed reaction is N-hexadecanoyl-(4R)-hydroxysphinganine + a 1,2-diacyl-sn-glycero-3-phosphocholine = N-hexadecanoyl-(4R)-hydroxysphinganine-phosphocholine + a 1,2-diacyl-sn-glycerol. It catalyses the reaction N-hexadecanoylsphinganine + a 1,2-diacyl-sn-glycero-3-phosphoethanolamine = N-hexadecanoyl-sphinganine-1-phosphoethanolamine + a 1,2-diacyl-sn-glycerol. The enzyme catalyses N-hexadecanoyl-(4R)-hydroxysphinganine + a 1,2-diacyl-sn-glycero-3-phosphoethanolamine = N-hexadecanoyl-(4R)-hydroxysphinganine-1-phosphoethanolamine + a 1,2-diacyl-sn-glycerol. The protein operates within sphingolipid metabolism. Sphingomyelin synthase that primarily contributes to sphingomyelin synthesis and homeostasis at the plasma membrane. Catalyzes the reversible transfer of phosphocholine moiety in sphingomyelin biosynthesis: in the forward reaction transfers phosphocholine head group of phosphatidylcholine (PC) on to ceramide (CER) to form ceramide phosphocholine (sphingomyelin, SM) and diacylglycerol (DAG) as by-product, and in the reverse reaction transfers phosphocholine from SM to DAG to form PC and CER. The direction of the reaction appears to depend on the levels of CER and DAG in the plasma membrane. Does not use free phosphorylcholine or CDP-choline as donors. Can also transfer phosphoethanolamine head group of phosphatidylethanolamine (PE) on to ceramide (CER) to form ceramide phosphoethanolamine (CPE). Regulates receptor-mediated signal transduction via mitogenic DAG and proapoptotic CER, as well as via SM, a structural component of membrane rafts that serve as platforms for signal transduction and protein sorting. To a lesser extent, plays a role in secretory transport via regulation of DAG pool at the Golgi apparatus and its downstream effects on PRKD1. Required for normal bone matrix mineralization. The sequence is that of Phosphatidylcholine:ceramide cholinephosphotransferase 2 (Sgms2) from Mus musculus (Mouse).